The chain runs to 33 residues: Gastrin (33 aa).

Residues 1–21 (ELEPQGPPHLGTDLSKKQGPW) form a disordered region. Gln-18 carries the post-translational modification Pyrrolidone carboxylic acid. Tyr-28 is modified (sulfotyrosine). At Phe-33 the chain carries Phenylalanine amide.

Belongs to the gastrin/cholecystokinin family.

It localises to the secreted. Its function is as follows. Gastrin stimulates the stomach mucosa to produce and secrete hydrochloric acid and the pancreas to secrete its digestive enzymes. It also stimulates smooth muscle contraction and increases blood circulation and water secretion in the stomach and intestine. The sequence is that of Gastrin (GAST) from Chinchilla chinchilla (Short-tailed chinchilla).